The following is a 361-amino-acid chain: Aromatic amino acid aminotransferase (361 aa).

K221 is subject to N6-(pyridoxal phosphate)lysine.

The protein belongs to the class-II pyridoxal-phosphate-dependent aminotransferase family. In terms of assembly, homodimer. The cofactor is pyridoxal 5'-phosphate.

The catalysed reaction is an aromatic L-alpha-amino acid + 2-oxoglutarate = an aromatic oxo-acid + L-glutamate. In terms of biological role, aminotransferase that catalyzes the conversion of aromatic amino acids and 2-oxoglutarate into corresponding aromatic oxo acids and L-glutamate. The chain is Aromatic amino acid aminotransferase from Mycobacterium marinum (strain ATCC BAA-535 / M).